The following is a 184-amino-acid chain: Photosystem I assembly protein Ycf4 (184 aa).

Helical transmembrane passes span 19–39 (ISNLCWAFTLFLGSLGFVLVG) and 57–77 (IIFFPQGIVMSFYGIAGLFIS).

It belongs to the Ycf4 family.

Its subcellular location is the plastid thylakoid membrane. In terms of biological role, seems to be required for the assembly of the photosystem I complex. This Cuscuta reflexa (Southern Asian dodder) protein is Photosystem I assembly protein Ycf4.